The following is a 283-amino-acid chain: Putative F-box protein At1g60370 (283 aa).

The region spanning 4 to 53 (GEKLESIPIDLIIEIHSRLPAESVARFRCVSKLWGSMFRRPYFTELFLTR) is the F-box domain.

The protein is Putative F-box protein At1g60370 of Arabidopsis thaliana (Mouse-ear cress).